Consider the following 105-residue polypeptide: DNA-directed RNA polymerase subunit omega (105 aa).

This sequence belongs to the RNA polymerase subunit omega family. In terms of assembly, the RNAP catalytic core consists of 2 alpha, 1 beta, 1 beta' and 1 omega subunit. When a sigma factor is associated with the core the holoenzyme is formed, which can initiate transcription.

It carries out the reaction RNA(n) + a ribonucleoside 5'-triphosphate = RNA(n+1) + diphosphate. In terms of biological role, promotes RNA polymerase assembly. Latches the N- and C-terminal regions of the beta' subunit thereby facilitating its interaction with the beta and alpha subunits. The chain is DNA-directed RNA polymerase subunit omega from Streptococcus equi subsp. zooepidemicus (strain MGCS10565).